We begin with the raw amino-acid sequence, 251 residues long: tRNA (guanine-N(7)-)-methyltransferase (251 aa).

S-adenosyl-L-methionine contacts are provided by Glu-80, Glu-105, Asp-132, and Asp-155. Asp-155 is a catalytic residue. Substrate is bound by residues Lys-159, Asp-191, and 228–231; that span reads TKFE.

The protein belongs to the class I-like SAM-binding methyltransferase superfamily. TrmB family.

It carries out the reaction guanosine(46) in tRNA + S-adenosyl-L-methionine = N(7)-methylguanosine(46) in tRNA + S-adenosyl-L-homocysteine. Its pathway is tRNA modification; N(7)-methylguanine-tRNA biosynthesis. Its function is as follows. Catalyzes the formation of N(7)-methylguanine at position 46 (m7G46) in tRNA. The protein is tRNA (guanine-N(7)-)-methyltransferase of Histophilus somni (strain 2336) (Haemophilus somnus).